Here is a 195-residue protein sequence, read N- to C-terminus: Probable GTP-binding protein EngB (195 aa).

Positions 24-195 (GLSEVGLSGR…QIWNVIEKYL (172 aa)) constitute an EngB-type G domain. GTP contacts are provided by residues 32–39 (GRSNVGKS), 59–63 (GKTQT), 77–80 (DVPG), 144–147 (TKED), and 176–178 (YSS). Serine 39 and threonine 61 together coordinate Mg(2+).

Belongs to the TRAFAC class TrmE-Era-EngA-EngB-Septin-like GTPase superfamily. EngB GTPase family. Mg(2+) is required as a cofactor.

Its function is as follows. Necessary for normal cell division and for the maintenance of normal septation. The chain is Probable GTP-binding protein EngB from Staphylococcus saprophyticus subsp. saprophyticus (strain ATCC 15305 / DSM 20229 / NCIMB 8711 / NCTC 7292 / S-41).